A 372-amino-acid chain; its full sequence is Protein phosphatase Mn(2+)-dependent 1K (372 aa).

The transit peptide at methionine 1–glutamine 29 directs the protein to the mitochondrion. The segment at valine 34–serine 55 is disordered. Residues arginine 46 to tryptophan 61 are critical for association with the BCKDH complex. A PPM-type phosphatase domain is found at asparagine 94–phenylalanine 346. 2 residues coordinate Mn(2+): aspartate 127 and glycine 128. Serine 248 carries the post-translational modification Phosphoserine. Residues aspartate 298 and aspartate 337 each coordinate Mn(2+).

The protein belongs to the PP2C family. Monomer. Interacts with E1 and E2 components of the branched-chain alpha-ketoacid dehydrogenase (BCKDH) complex; this interaction requires colocalization in mitochondria. Interacts with BCKDHA but not with BCKDHB of the E1 component. Interacts with the 24-meric E2 core composed of DBT monomers with a 24:1 stoichiometry; the N-terminal region (residues 49-61) of PPM1K and C-terminal linker of the lipoyl domain of DBT (residues 145-160) are critical for this interaction, whereas the lipoyl prosthetic group is dispensable. Competes with BCKDK for binding to the E2 core; this interaction is modulated by branched-chain alpha-keto acids. At steady state, BCKDH holoenzyme preferentially binds BCKDK and BCKDHA is phosphorylated. In response to high levels of branched-chain alpha-keto acids, the inhibitory BCKDK is replaced by activating PPM1K leading to BCKDHA dephosphorylation and BCAA degradation. Requires Mn(2+) as cofactor.

Its subcellular location is the mitochondrion matrix. The catalysed reaction is O-phospho-L-seryl-[3-methyl-2-oxobutanoate dehydrogenase] + H2O = L-seryl-[3-methyl-2-oxobutanoate dehydrogenase] + phosphate. It catalyses the reaction O-phospho-L-seryl-[protein] + H2O = L-seryl-[protein] + phosphate. Its pathway is protein modification. With respect to regulation, up-regulated upon interaction with the 24-meric DBT/E2 core of the BCKDH complex. Inhibited by Mg(2+) and Ca(2+) ions likely by competing with Mn(2+) ions for binding to the same metal-binding sites. Functionally, serine/threonine-protein phosphatase component of macronutrients metabolism. Forms a functional kinase and phosphatase pair with BCKDK, serving as a metabolic regulatory node that coordinates branched-chain amino acids (BCAAs) with glucose and lipid metabolism via two distinct phosphoprotein targets: mitochondrial BCKDHA subunit of the branched-chain alpha-ketoacid dehydrogenase (BCKDH) complex and cytosolic ACLY, a lipogenic enzyme of Krebs cycle. At high levels of branched-chain ketoacids, dephosphorylates and activates mitochondrial BCKDH complex, a multisubunit complex consisting of three multimeric components each involved in different steps of BCAA catabolism: E1 composed of BCKDHA and BCKDHB, E2 core composed of DBT monomers, and E3 composed of DLD monomers. Tightly associates with the E2 component of BCKDH complex and dephosphorylates BCKDHA on Ser-337. Regulates the reversible phosphorylation of ACLY in response to changes in cellular carbohydrate abundance such as occurs during fasting to feeding metabolic transition. At fasting state, appears to dephosphorylate ACLY on Ser-455 and inactivate it. Refeeding stimulates MLXIPL/ChREBP transcription factor, leading to increased BCKDK to PPM1K expression ratio, phosphorylation and activation of ACLY that ultimately results in the generation of malonyl-CoA and oxaloacetate immediate substrates of de novo lipogenesis and gluconeogenesis, respectively. Recognizes phosphosites having SxS or RxxS motifs and strictly depends on Mn(2+) ions for the phosphatase activity. Regulates Ca(2+)-induced opening of mitochondrial transition pore and apoptotic cell death. The sequence is that of Protein phosphatase Mn(2+)-dependent 1K from Homo sapiens (Human).